The following is a 109-amino-acid chain: Guanylate cyclase activator 2B (109 aa).

A signal peptide spans 1–23 (MKVLALPVAVAAMLLVLAQNTQS). The propeptide occupies 24–94 (VYIQYEGFQV…NIFRALRSIS (71 aa)). Disulfide bonds link C65/C78, C98/C106, and C101/C109.

This sequence belongs to the guanylin family. Small and large intestine and atria and ventricles of heart. Both uroguanylin and prouroguanylin are found in plasma.

It is found in the secreted. In terms of biological role, endogenous activator of intestinal guanylate cyclase. It stimulates this enzyme through the same receptor binding region as the heat-stable enterotoxins. May be a potent physiological regulator of intestinal fluid and electrolyte transport. May be an autocrine/paracrine regulator of intestinal salt and water transport. The sequence is that of Guanylate cyclase activator 2B (GUCA2B) from Didelphis virginiana (North American opossum).